The chain runs to 55 residues: uncharacterized protein (55 aa).

This is an uncharacterized protein from Dictyostelium discoideum (Social amoeba).